A 243-amino-acid polypeptide reads, in one-letter code: Probable aquaporin SIP1-2 (243 aa).

2 consecutive transmembrane segments (helical) span residues 12–32 (VITFLWVILSATFGIQTAAIV) and 42–62 (WAPLVISTLVVFVSISIFTVI). Positions 72–74 (NPC) match the NPA 1 motif. Helical transmembrane passes span 90 to 110 (FSLAIRSPAQAIGAAGGAITI), 135 to 155 (GAISEVVLSFSVTFLVLLIIL), and 162 to 182 (LAKTFLLALATVSVFVVGSKF). An NPA 2 motif is present at residues 188–190 (NPA). A helical transmembrane segment spans residues 210-230 (VYWISSYTGAILSAMLFRIIF).

Belongs to the MIP/aquaporin (TC 1.A.8) family. SIP (TC 1.A.8.10) subfamily. In terms of tissue distribution, expressed in roots and above ground. Expressed in elongating regions of the root tips, cotyledons, minor veins and hydathode cells of the rosette leaves. Weakly expressed in vascular tissues of the flower petals, filaments of stamens, upper part of the styles and receptacles of the siliques.

The protein resides in the endoplasmic reticulum membrane. Functionally, water channel required to facilitate the transport of water across cell membrane. This Arabidopsis thaliana (Mouse-ear cress) protein is Probable aquaporin SIP1-2 (SIP1-2).